Consider the following 180-residue polypeptide: Cytokinin-beta-glucosidase 2 (180 aa).

In terms of biological role, hydrolyzes cytokinin glucosides thus liberating free cytokinins. The polypeptide is Cytokinin-beta-glucosidase 2 (ROLC2) (Linaria vulgaris (Toadflax)).